Reading from the N-terminus, the 145-residue chain is LIM domain only protein 3 (145 aa).

LIM zinc-binding domains follow at residues 11 to 73 and 75 to 137; these read KGCA…LFGV and GNCA…GLMK.

This is LIM domain only protein 3 from Danio rerio (Zebrafish).